The sequence spans 43 residues: Myotoxin-2 (43 aa).

3 cysteine pairs are disulfide-bonded: Cys-4-Cys-36, Cys-11-Cys-30, and Cys-18-Cys-37.

The protein belongs to the crotamine-myotoxin family. In terms of assembly, monomer. Expressed by the venom gland.

The protein localises to the secreted. Cationic peptide that possesses multiple functions. It acts as a cell-penetrating peptide (CPP), and as a potent voltage-gated potassium channel (Kv) inhibitor. It exhibits antimicrobial activities, hind limb paralysis, and severe muscle necrosis by a non-enzymatic mechanism. In Crotalus concolor (Midget faded rattlesnake), this protein is Myotoxin-2.